The sequence spans 843 residues: Neuroligin-1 (843 aa).

The N-terminal stretch at 1-45 (MALPRCMWPNYVWRAMMACVVHRGSGAPLTLCLLGCLLQTFHVLS) is a signal peptide. At 46–697 (QKLDDVDPLV…DQRDYSTELS (652 aa)) the chain is on the extracellular side. An N-linked (GlcNAc...) (complex) asparagine glycan is attached at Asn109. Cystine bridges form between Cys117/Cys153 and Cys172/Cys181. Residues Asn303 and Asn343 are each glycosylated (N-linked (GlcNAc...) (complex) asparagine). Cystine bridges form between Cys342/Cys353 and Cys512/Cys546. An N-linked (GlcNAc...) asparagine glycan is attached at Asn547. The disordered stretch occupies residues 647 to 688 (TKVPSTDITLRPTRKNSTPVTSAFPTAKQDDPKQQPSPFSVD). The segment covering 661–670 (KNSTPVTSAF) has biased composition (polar residues). O-linked (GalNAc...) serine glycans are attached at residues Ser683 and Ser686. A helical membrane pass occupies residues 698 to 718 (VTIAVGASLLFLNILAFAALY). The Cytoplasmic portion of the chain corresponds to 719–843 (YKKDKRRHDV…HPHSHSTTRV (125 aa)). The interval 822–843 (GGQNNTLPHPHPHPHSHSTTRV) is disordered. Over residues 831 to 843 (PHPHPHSHSTTRV) the composition is skewed to basic residues.

The protein belongs to the type-B carboxylesterase/lipase family. In terms of assembly, interacts with neurexins NRXN1, NRXN2 and NRXN3. Interaction with neurexins is mediated by heparan sulfate glycan modification on neurexin. Interacts with NLGN3. Interacts (via its C-terminus) with DLG4/PSD-95 (via PDZ domain 3). Interacts with GOPC. Interacts with AIP1 and PDZRN3. Post-translationally, the N-terminus is blocked. Expressed in brain, almost exclusively in neurons, and spinal cord. Detected in pancreas islet beta cells.

The protein localises to the cell membrane. It is found in the postsynaptic density. Its subcellular location is the synaptic cleft. It localises to the synaptic cell membrane. Cell surface protein involved in cell-cell-interactions via its interactions with neurexin family members. Plays a role in synapse function and synaptic signal transmission, and probably mediates its effects by recruiting and clustering other synaptic proteins. May promote the initial formation of synapses, but is not essential for this. In vitro, triggers the de novo formation of presynaptic structures. May be involved in specification of excitatory synapses. Required to maintain wakefulness quality and normal synchrony of cerebral cortex activity during wakefulness and sleep. The protein is involved in nervous system development. In Rattus norvegicus (Rat), this protein is Neuroligin-1 (Nlgn1).